Here is a 195-residue protein sequence, read N- to C-terminus: dITP/XTP pyrophosphatase (195 aa).

T9–K14 contributes to the substrate binding site. Residues E41 and D70 each contribute to the Mg(2+) site. D70 acts as the Proton acceptor in catalysis. Residues S71, F155–D158, K178, and H183–R184 contribute to the substrate site.

Belongs to the HAM1 NTPase family. As to quaternary structure, homodimer. Mg(2+) is required as a cofactor.

The catalysed reaction is XTP + H2O = XMP + diphosphate + H(+). The enzyme catalyses dITP + H2O = dIMP + diphosphate + H(+). It carries out the reaction ITP + H2O = IMP + diphosphate + H(+). In terms of biological role, pyrophosphatase that catalyzes the hydrolysis of nucleoside triphosphates to their monophosphate derivatives, with a high preference for the non-canonical purine nucleotides XTP (xanthosine triphosphate), dITP (deoxyinosine triphosphate) and ITP. Seems to function as a house-cleaning enzyme that removes non-canonical purine nucleotides from the nucleotide pool, thus preventing their incorporation into DNA/RNA and avoiding chromosomal lesions. This Haemophilus influenzae (strain ATCC 51907 / DSM 11121 / KW20 / Rd) protein is dITP/XTP pyrophosphatase.